The following is a 223-amino-acid chain: Cytidylate kinase (223 aa).

10–18 is an ATP binding site; that stretch reads GPASSGKST.

It belongs to the cytidylate kinase family. Type 1 subfamily.

It is found in the cytoplasm. It catalyses the reaction CMP + ATP = CDP + ADP. It carries out the reaction dCMP + ATP = dCDP + ADP. The polypeptide is Cytidylate kinase (Streptococcus pneumoniae (strain Hungary19A-6)).